The following is a 488-amino-acid chain: Malonate-semialdehyde dehydrogenase (488 aa).

7 residues coordinate NAD(+): alanine 150, phenylalanine 152, lysine 176, glutamate 179, arginine 180, serine 229, and threonine 251. The active-site Nucleophile is cysteine 284. Glutamate 382 is a binding site for NAD(+).

This sequence belongs to the aldehyde dehydrogenase family. IolA subfamily. As to quaternary structure, homotetramer.

The enzyme catalyses 3-oxopropanoate + NAD(+) + CoA + H2O = hydrogencarbonate + acetyl-CoA + NADH + H(+). The catalysed reaction is 2-methyl-3-oxopropanoate + NAD(+) + CoA + H2O = propanoyl-CoA + hydrogencarbonate + NADH + H(+). It participates in polyol metabolism; myo-inositol degradation into acetyl-CoA; acetyl-CoA from myo-inositol: step 7/7. Catalyzes the oxidation of malonate semialdehyde (MSA) and methylmalonate semialdehyde (MMSA) into acetyl-CoA and propanoyl-CoA, respectively. Is involved in a myo-inositol catabolic pathway. Bicarbonate, and not CO2, is the end-product of the enzymatic reaction. The protein is Malonate-semialdehyde dehydrogenase of Listeria monocytogenes serotype 4a (strain HCC23).